Consider the following 843-residue polypeptide: MTQVTVKELAQEVEAPVERLLQQMREAGLPHTDAGQVVTDNEKQTLLTHLKSSHKSKAEEPRKITLQRKTTSTLRVAGSKSISVEVRKKKVFVQRSPEEIQAEQKREQDERRAAENAARDKVDADVRQRNEEQARRHATATAAAAPAAKAEPAPAAAAPAPAPVVADAPASEDAAARAAERKKDETRRNESRTRDDDRRRGEAPRVSIKVKVKEKEKAPTPRAAPRTTDEESDGARRGRGGKGKLKKRNQHGFQNPTGPVIRDVTIGETITVSELAQQMSVKAAEVVKFMFKMGTPVTINQVLDQETAQLIAEELGHKVTLVSDTALEDSLAESLKFEGQAESRAPVVTVMGHVDHGKTSLLDYIRRAKVAAGEAGGITQHIGAYHVETDRGMVTFLDTPGHAAFTQMRARGAKATDIVILVVAADDGVMPQTREAVQHAKAAGVPLVVAVNKIDKPGADLDRIRNELSVEGVTSEEWGGDTPFVKVSAKMGTGVDELLEAVLLQAEVLELTATPTAPGRGVVVESRLDKGRGPVATILVQDGTLRQGDMVLCGSNYGRVRAMLDENGKPVKEAGPSIPVEILGLDGTPEAGDELSVVADEKKAREVALFRQGKYREVKLARAHAGKLENIFETMGQEEKKTLNIVLKTDVRGSLEALQGSLGGLGNDEVQVRVIGGGVGGITESDANLALASNAVLFGFNVRADAGARKIVEQEGLDMRYYNVIYDIIEDVKKALTGMLGSDVRENILGVAEVRDVFRSPKFGAIAGCMVIEGTVYRNRPIRVLRDDVVIFEGELESLRRFKDDAAEVRSGMECGIGVKSYNDVKVGDKIEVFEKVQVARTL.

Disordered stretches follow at residues 50–72 and 94–260; these read LKSSHKSKAEEPRKITLQRKTTS and QRSP…TGPV. Positions 96–135 are enriched in basic and acidic residues; sequence SPEEIQAEQKREQDERRAAENAARDKVDADVRQRNEEQAR. Positions 139-173 are enriched in low complexity; that stretch reads TATAAAAPAAKAEPAPAAAAPAPAPVVADAPASED. 2 stretches are compositionally biased toward basic and acidic residues: residues 174–203 and 227–236; these read AAARAAERKKDETRRNESRTRDDDRRRGEA and TTDEESDGAR. Positions 237–250 are enriched in basic residues; the sequence is RGRGGKGKLKKRNQ. In terms of domain architecture, tr-type G spans 343 to 516; it reads SRAPVVTVMG…EVLELTATPT (174 aa). A G1 region spans residues 352 to 359; that stretch reads GHVDHGKT. GTP is bound at residue 352–359; sequence GHVDHGKT. The segment at 377–381 is G2; the sequence is GITQH. The interval 398-401 is G3; that stretch reads DTPG. GTP is bound by residues 398-402 and 452-455; these read DTPGH and NKID. Residues 452–455 are G4; that stretch reads NKID. The tract at residues 488-490 is G5; sequence SAK.

Belongs to the TRAFAC class translation factor GTPase superfamily. Classic translation factor GTPase family. IF-2 subfamily.

It localises to the cytoplasm. One of the essential components for the initiation of protein synthesis. Protects formylmethionyl-tRNA from spontaneous hydrolysis and promotes its binding to the 30S ribosomal subunits. Also involved in the hydrolysis of GTP during the formation of the 70S ribosomal complex. The chain is Translation initiation factor IF-2 from Pseudomonas putida (strain W619).